Reading from the N-terminus, the 158-residue chain is Protein Smg homolog (158 aa).

It belongs to the Smg family.

The chain is Protein Smg homolog from Pseudoalteromonas atlantica (strain T6c / ATCC BAA-1087).